The following is a 464-amino-acid chain: ESX-1 secretion system protein EccE1 (464 aa).

A run of 2 helical transmembrane segments spans residues 11 to 31 (FTTGHGIWAATLIPACIAICM) and 34 to 54 (DLLWLGITLGALIALFSVLTI).

It belongs to the EccE family. Part of the ESX-1 / type VII secretion system (T7SS), which is composed of cytosolic and membrane components. The ESX-1 membrane complex is composed of EccB1, EccCa1, EccCb1, EccD1 and EccE1.

The protein resides in the cell inner membrane. Its function is as follows. Part of the ESX-1 / type VII specialized secretion system (T7SS), which exports several proteins including EsxA and EsxB. Plays a role in DNA conjugation, in at least a donor strain. The protein is ESX-1 secretion system protein EccE1 of Mycolicibacterium smegmatis (strain ATCC 700084 / mc(2)155) (Mycobacterium smegmatis).